The sequence spans 342 residues: L-threonine 3-dehydrogenase (342 aa).

Zn(2+) is bound at residue cysteine 39. Residues threonine 41 and histidine 44 each act as charge relay system in the active site. Zn(2+)-binding residues include histidine 64, glutamate 65, cysteine 94, cysteine 97, cysteine 100, and cysteine 108. NAD(+)-binding positions include isoleucine 176, aspartate 196, arginine 201, 263-265, and 287-288; these read LGI and IY.

Belongs to the zinc-containing alcohol dehydrogenase family. In terms of assembly, homotetramer. Requires Zn(2+) as cofactor.

The protein localises to the cytoplasm. The enzyme catalyses L-threonine + NAD(+) = (2S)-2-amino-3-oxobutanoate + NADH + H(+). Its pathway is amino-acid degradation; L-threonine degradation via oxydo-reductase pathway; glycine from L-threonine: step 1/2. Its function is as follows. Catalyzes the NAD(+)-dependent oxidation of L-threonine to 2-amino-3-ketobutyrate. The chain is L-threonine 3-dehydrogenase from Protochlamydia amoebophila (strain UWE25).